Consider the following 119-residue polypeptide: Holo-[acyl-carrier-protein] synthase (119 aa).

The Mg(2+) site is built by Asp-7 and Glu-56.

This sequence belongs to the P-Pant transferase superfamily. AcpS family. Mg(2+) serves as cofactor.

The protein localises to the cytoplasm. It catalyses the reaction apo-[ACP] + CoA = holo-[ACP] + adenosine 3',5'-bisphosphate + H(+). Functionally, transfers the 4'-phosphopantetheine moiety from coenzyme A to a Ser of acyl-carrier-protein. The chain is Holo-[acyl-carrier-protein] synthase from Chlamydia trachomatis serovar L2 (strain ATCC VR-902B / DSM 19102 / 434/Bu).